The primary structure comprises 130 residues: Acidic phospholipase A2 daboiatoxin B chain (130 aa).

The N-terminal stretch at Met-1–Gly-8 is a signal peptide. Disulfide bonds link Cys-34–Cys-123, Cys-36–Cys-52, Cys-51–Cys-103, Cys-57–Cys-130, Cys-58–Cys-96, Cys-65–Cys-89, and Cys-83–Cys-94. Positions 35, 37, and 39 each coordinate Ca(2+). His-55 is an active-site residue. Position 56 (Asp-56) interacts with Ca(2+). Asp-97 is an active-site residue.

This sequence belongs to the phospholipase A2 family. Group II subfamily. D49 sub-subfamily. Heterodimer of an acidic protein having phospholipase A2 activity (B chain) and an A chain which weakly inhibits the B chain enzymatic activity but potentiates its lethal potency. The cofactor is Ca(2+). In terms of tissue distribution, expressed by the venom gland.

It localises to the secreted. It catalyses the reaction a 1,2-diacyl-sn-glycero-3-phosphocholine + H2O = a 1-acyl-sn-glycero-3-phosphocholine + a fatty acid + H(+). In terms of biological role, monomer: Snake venom phospholipase A2 (PLA2) that shows a high PLA2 activity (2110 umol/min/mg). Functionally, heterodimer (A and B chains): snake venom phospholipase A2 that shows a moderate PLA2 activity (1377 umol/min/mg). Acts as a presynaptic neurotoxin. In vivo, induces edema and produces neurotoxic symptoms in mice. It exhibits indirect hemolysis and a strong myonecrotic activity and is cytotoxic. PLA2 catalyzes the calcium-dependent hydrolysis of the 2-acyl groups in 3-sn-phosphoglycerides. The protein is Acidic phospholipase A2 daboiatoxin B chain of Daboia siamensis (Eastern Russel's viper).